The following is a 287-amino-acid chain: Pol-RFamide neuropeptides (287 aa).

A signal peptide spans 1-21 (MNLITLLVLGVSTCLIYGIEA). A propeptide spanning residues 22-52 (DEKTSSALENEIVEILNGNFKNEKKSIETSD) is cleaved from the precursor. Pyrrolidone carboxylic acid is present on Q53. F59 bears the Phenylalanine amide mark. A propeptide spanning residues 62–64 (EVN) is cleaved from the precursor. At Q65 the chain carries Pyrrolidone carboxylic acid. Phenylalanine amide is present on F71. Residues 74 to 77 (ELSD) constitute a propeptide that is removed on maturation. Q78 bears the Pyrrolidone carboxylic acid mark. Position 84 is a phenylalanine amide (F84). Residues 87-90 (ELSD) constitute a propeptide that is removed on maturation. At Q91 the chain carries Pyrrolidone carboxylic acid. F97 carries the phenylalanine amide modification. The propeptide occupies 100–103 (EVLD). A Pyrrolidone carboxylic acid modification is found at Q104. Position 110 is a phenylalanine amide (F110). Positions 113–116 (DASN) are excised as a propeptide. Q117 carries the post-translational modification Pyrrolidone carboxylic acid. F123 carries the post-translational modification Phenylalanine amide. Positions 126–129 (ELSD) are excised as a propeptide. Q130 carries the pyrrolidone carboxylic acid modification. F136 is modified (phenylalanine amide). Positions 139 to 142 (EGSN) are excised as a propeptide. Q143 carries the pyrrolidone carboxylic acid modification. F149 bears the Phenylalanine amide mark. The propeptide occupies 152 to 168 (EASKNDLEKQNGRGDSD). The residue at position 169 (Q169) is a Pyrrolidone carboxylic acid. At F175 the chain carries Phenylalanine amide. A propeptide spanning residues 178–181 (EARK) is cleaved from the precursor. Pyrrolidone carboxylic acid is present on Q182. F188 bears the Phenylalanine amide mark. Residues 192-194 (DMN) constitute a propeptide that is removed on maturation. The residue at position 195 (Q195) is a Pyrrolidone carboxylic acid. The residue at position 201 (H201) is a Histidine amide. Residues 204–207 (ETSD) constitute a propeptide that is removed on maturation. At Q208 the chain carries Pyrrolidone carboxylic acid. F214 is subject to Phenylalanine amide. A propeptide spanning residues 217–220 (QLSD) is cleaved from the precursor. Q221 carries the post-translational modification Pyrrolidone carboxylic acid. A Phenylalanine amide modification is found at F227. Positions 229 to 267 (REVKNDKNNPFRSRYTGDSTQLQRENNQPIEELRDNTEK) are disordered. A propeptide spanning residues 230 to 287 (EVKNDKNNPFRSRYTGDSTQLQRENNQPIEELRDNTEKVSIENKPIMKKTSVKISKTV) is cleaved from the precursor. The span at 238–257 (PFRSRYTGDSTQLQRENNQP) shows a compositional bias: polar residues.

Belongs to the FARP (FMRFamide related peptide) family. The N-terminal processing sites of the Pol-RFamide peptides are acidic suggesting that cniderian nervous systems may use a variety of unconventional processing procedures.

It localises to the secreted. Has direct action on motoneurons, and effect includes transient inhibition followed by prolonged excitation. The sequence is that of Pol-RFamide neuropeptides from Polyorchis penicillatus (Hydromedusa).